Reading from the N-terminus, the 159-residue chain is D-aminoacyl-tRNA deacylase (159 aa).

The Gly-cisPro motif, important for rejection of L-amino acids motif lies at 142-143; that stretch reads GP.

The protein belongs to the DTD family. Homodimer.

The protein localises to the cytoplasm. It catalyses the reaction glycyl-tRNA(Ala) + H2O = tRNA(Ala) + glycine + H(+). The enzyme catalyses a D-aminoacyl-tRNA + H2O = a tRNA + a D-alpha-amino acid + H(+). Its function is as follows. An aminoacyl-tRNA editing enzyme that deacylates mischarged D-aminoacyl-tRNAs. Also deacylates mischarged glycyl-tRNA(Ala), protecting cells against glycine mischarging by AlaRS. Acts via tRNA-based rather than protein-based catalysis; rejects L-amino acids rather than detecting D-amino acids in the active site. By recycling D-aminoacyl-tRNA to D-amino acids and free tRNA molecules, this enzyme counteracts the toxicity associated with the formation of D-aminoacyl-tRNA entities in vivo and helps enforce protein L-homochirality. In Albidiferax ferrireducens (strain ATCC BAA-621 / DSM 15236 / T118) (Rhodoferax ferrireducens), this protein is D-aminoacyl-tRNA deacylase.